Consider the following 221-residue polypeptide: Adenylate kinase (221 aa).

10-15 contributes to the ATP binding site; the sequence is GAGKGT. Residues 30-59 are NMP; sequence STGDMLRAAVKAGTPLGLEAKRFMDAGELV. AMP contacts are provided by residues threonine 31, arginine 36, 57–59, 85–88, and glutamine 92; these read ELV and GFPR. Positions 122–159 are LID; sequence GRRSHAASGRTYHVKFNPPKVEGVDDMTGEPLIQRDDD. Residues arginine 123 and 132 to 133 contribute to the ATP site; that span reads TY. AMP is bound by residues arginine 156 and arginine 167. An ATP-binding site is contributed by glycine 207.

The protein belongs to the adenylate kinase family. As to quaternary structure, monomer.

It localises to the cytoplasm. The catalysed reaction is AMP + ATP = 2 ADP. It functions in the pathway purine metabolism; AMP biosynthesis via salvage pathway; AMP from ADP: step 1/1. Functionally, catalyzes the reversible transfer of the terminal phosphate group between ATP and AMP. Plays an important role in cellular energy homeostasis and in adenine nucleotide metabolism. This is Adenylate kinase from Paraburkholderia phytofirmans (strain DSM 17436 / LMG 22146 / PsJN) (Burkholderia phytofirmans).